A 147-amino-acid polypeptide reads, in one-letter code: DNA polymerase epsilon subunit 3 (147 aa).

Ala2 carries the N-acetylalanine modification. Residue Thr83 is modified to Phosphothreonine. Positions 85 to 146 (LKEALEAYRR…EEQNEEEEVD (62 aa)) form a coiled coil. The span at 93–124 (RREQKGKKEASEQKKKDKDKKTDSEEQDKSRD) shows a compositional bias: basic and acidic residues. The segment at 93–147 (RREQKGKKEASEQKKKDKDKKTDSEEQDKSRDEDNDEDEERLEEEEQNEEEEVDN) is disordered. Phosphoserine is present on Ser122. Positions 125–147 (EDNDEDEERLEEEEQNEEEEVDN) are enriched in acidic residues.

As to quaternary structure, component of the DNA polymerase epsilon complex consisting of four subunits: the catalytic subunit POLE and the accessory subunits POLE2, POLE3 and POLE4. Interaction with POLE4 is a prerequisite for further binding with POLE and POLE2. Heterodimer with CHRAC1; binds to DNA. Component of the CHRAC ISWI chromatin remodeling complex at least composed of SMARCA5/SNF2H, BAZ1A/ACF1, CHRAC1 and POLE3; the complex preferentially binds DNA through the CHRAC1-POLE3 heterodimer and possesses ATP-dependent nucleosome-remodeling activity. Within the complex, the heterodimer with CHRAC1 interacts with SMARCA5/SNF2H; the interaction is direct and enhances nucleosome sliding activity by the SMARCA5/SNF2H and BAZ1A/ACF1 interaction. Within the complex, the heterodimer with CHRAC1 interacts with BAZ1A/ACF1; the interactions are direct.

The protein resides in the nucleus. In terms of biological role, accessory component of the DNA polymerase epsilon complex. Participates in DNA repair and in chromosomal DNA replication. Forms a complex with CHRAC1 and binds naked DNA, which is then incorporated into chromatin, aided by the nucleosome-remodeling activity of ISWI/SNF2H and ACF1. Does not enhance nucleosome sliding activity of the ACF-5 ISWI chromatin remodeling complex. This is DNA polymerase epsilon subunit 3 (POLE3) from Bos taurus (Bovine).